The primary structure comprises 301 residues: Pseudouridine-5'-phosphate glycosidase (301 aa).

Glutamate 23 (proton donor) is an active-site residue. 2 residues coordinate substrate: lysine 84 and valine 104. Aspartate 136 is a Mn(2+) binding site. 138 to 140 (SRD) lines the substrate pocket. Lysine 157 (nucleophile) is an active-site residue.

This sequence belongs to the pseudouridine-5'-phosphate glycosidase family. Homotrimer. Mn(2+) serves as cofactor.

It carries out the reaction D-ribose 5-phosphate + uracil = psi-UMP + H2O. Functionally, catalyzes the reversible cleavage of pseudouridine 5'-phosphate (PsiMP) to ribose 5-phosphate and uracil. Functions biologically in the cleavage direction, as part of a pseudouridine degradation pathway. The polypeptide is Pseudouridine-5'-phosphate glycosidase (Mycoplasmopsis agalactiae (strain NCTC 10123 / CIP 59.7 / PG2) (Mycoplasma agalactiae)).